Here is a 132-residue protein sequence, read N- to C-terminus: Holo-[acyl-carrier-protein] synthase (132 aa).

Mg(2+) contacts are provided by Asp-8 and Glu-62.

This sequence belongs to the P-Pant transferase superfamily. AcpS family. Requires Mg(2+) as cofactor.

It localises to the cytoplasm. The catalysed reaction is apo-[ACP] + CoA = holo-[ACP] + adenosine 3',5'-bisphosphate + H(+). Transfers the 4'-phosphopantetheine moiety from coenzyme A to a Ser of acyl-carrier-protein. This chain is Holo-[acyl-carrier-protein] synthase, found in Leptothrix cholodnii (strain ATCC 51168 / LMG 8142 / SP-6) (Leptothrix discophora (strain SP-6)).